A 414-amino-acid chain; its full sequence is MATNSSSGSLVRHKTRQVRVGRISIGSNAPVVVQSMTNTDTVDVLGTAMQVAELARAGSELVRITVNNEAAAKAVPHIRDRLLALNVDVPLVGDFHYNGHKLLSEHPACAEALAKLRINPGNVGAGAKRDPQFAAIVDIACRHDKPVRIGVNWGSLDPSVLARVMDQNAKLAQPRDANAVMREALVVSALESAAKAEEYGLGGDRIILSAKVSSVQDLIAVYRDLAARCDYPLHLGLTEAGMGSKGIVASTAALAVLLQEGIGDTIRISLTPEPNGSRAQEVVVAQEILQTMGLRAFTPMVIACPGCGRTTSTFFQELASGIQSYVRDQMPVWREQYDGVENMTVAVMGCVVNGPGESKHANIGISLPGTGETPAAPVFVDGEKTVTLRGDNIGTEFKAIVDDYVATRYVKKAG.

The [4Fe-4S] cluster site is built by Cys304, Cys307, Cys350, and Glu357.

The protein belongs to the IspG family. Requires [4Fe-4S] cluster as cofactor.

It carries out the reaction (2E)-4-hydroxy-3-methylbut-2-enyl diphosphate + oxidized [flavodoxin] + H2O + 2 H(+) = 2-C-methyl-D-erythritol 2,4-cyclic diphosphate + reduced [flavodoxin]. It participates in isoprenoid biosynthesis; isopentenyl diphosphate biosynthesis via DXP pathway; isopentenyl diphosphate from 1-deoxy-D-xylulose 5-phosphate: step 5/6. Converts 2C-methyl-D-erythritol 2,4-cyclodiphosphate (ME-2,4cPP) into 1-hydroxy-2-methyl-2-(E)-butenyl 4-diphosphate. The protein is 4-hydroxy-3-methylbut-2-en-1-yl diphosphate synthase (flavodoxin) of Aromatoleum aromaticum (strain DSM 19018 / LMG 30748 / EbN1) (Azoarcus sp. (strain EbN1)).